The sequence spans 175 residues: Adenine phosphoribosyltransferase (175 aa).

Belongs to the purine/pyrimidine phosphoribosyltransferase family. In terms of assembly, homodimer.

The protein resides in the cytoplasm. The catalysed reaction is AMP + diphosphate = 5-phospho-alpha-D-ribose 1-diphosphate + adenine. The protein operates within purine metabolism; AMP biosynthesis via salvage pathway; AMP from adenine: step 1/1. In terms of biological role, catalyzes a salvage reaction resulting in the formation of AMP, that is energically less costly than de novo synthesis. The polypeptide is Adenine phosphoribosyltransferase (Francisella philomiragia subsp. philomiragia (strain ATCC 25017 / CCUG 19701 / FSC 153 / O#319-036)).